The following is a 4662-amino-acid chain: Protein PF3D7_1417600 (4662 aa).

The next 2 membrane-spanning stretches (helical) occupy residues 136–156 (INYVFLQIIYNIILYFVYLYI) and 161–181 (YIYYILRTYLFLLLYNSFHII). One copy of the LRR 1 repeat lies at 466 to 489 (IKNIDSINKNHKRLIKISNYNITN). Positions 583 to 710 (YRNDGDVNNK…KMKPDNTLNE (128 aa)) are disordered. Low complexity predominate over residues 590 to 644 (NNKNGYNNNEHSNSSNERSNNNGDNNNNNHNNNNHNNNHHNNGSNNHNGNNNSNN). Positions 650–666 (DDDKKGNDKKNEDKDDE) are enriched in basic and acidic residues. Basic residues predominate over residues 690-701 (KKRKEKSKNKNK). Residues 783 to 856 (YKPTEPVNIF…ISNDIKMFWF (74 aa)) enclose the HSA domain. The disordered stretch occupies residues 942–967 (GLMNKMSHQNGKNNNHNDYNNKCEDN). One copy of the LRR 2 repeat lies at 1150 to 1172 (NVHINHIQYDDNNLYYNDDLYNY). The segment covering 1505–1524 (NNNNNSNNNNSNSNNNSNSN) has biased composition (low complexity). Disordered regions lie at residues 1505–1540 (NNNNNSNNNNSNSNNNSNSNIKTKESVSTTNHNNSS) and 1705–1761 (KINS…NEKD). The span at 1710–1761 (NNDKSDDKNDDKNDKKNDGKNDKNDEKDDNKTGEKGDNKIGEKDDNKINEKD) shows a compositional bias: basic and acidic residues. LRR repeat units follow at residues 2063-2086 (ITKVKFLPLFSSNNVNKLIGMFNK) and 2129-2153 (DEEINILNKNDDKINEYKDELNVKD). Residues 2228–2261 (KNKSNKKKRAKKNIKLGEEENESECNNEGECNNE) are disordered. The segment covering 2230-2241 (KSNKKKRAKKNI) has biased composition (basic residues). The span at 2246-2261 (EENESECNNEGECNNE) shows a compositional bias: acidic residues. LRR repeat units lie at residues 2672–2695 (LDKLKNFPINESIESSKNNNKTID), 2773–2796 (NTVLKDTIIESNEISCIVDKTVDI), 2864–2888 (INDDNKMNNFVNNNITHINNNVNNN), and 2904–2929 (ANNINNLNVNHLNNNISQINNNYNNS). A disordered region spans residues 2956–2975 (MNNTKQRSHSSYHTSFPMQN). 6 LRR repeats span residues 3377 to 3400 (QNNMNTINMNNINMNNINMNNITM), 3438 to 3461 (NNSMNNINISNNINYNISNNYNNS), 3756 to 3781 (SQRLQNIHLGNQQNDIQHMNLDNINN), 3935 to 3960 (QPNINNVGMNQPNINNVGMNQPNINN), 3965 to 3985 (QPNINNVGMNQPNINNVSMNQ), and 3986 to 4010 (PNINNVNMNQPNINNVSMNQPNINN). A coiled-coil region spans residues 4203-4272 (DMNQQERLQQ…ERLQQKWEQQ (70 aa)). 2 LRR repeats span residues 4296–4321 (YQELNNHTLQENTIAKDSMRQHIFLK) and 4333–4357 (QKMHSHQLQTEKMKTQQLSAHSLQQ). Residues 4384 to 4412 (QMNHQQINKHQMNQQQMNKQQMNQQQINQ) are disordered.

Its subcellular location is the membrane. The polypeptide is Protein PF3D7_1417600 (Plasmodium falciparum (isolate 3D7)).